We begin with the raw amino-acid sequence, 764 residues long: Thyrotropin receptor (764 aa).

The signal sequence occupies residues 1-20; it reads MRPPPLLHLALLLALPRSLG. Topologically, residues 21 to 413 are extracellular; sequence GKGCPSPPCE…EFNPCEDIMG (393 aa). A disulfide bridge links cysteine 31 with cysteine 41. N-linked (GlcNAc...) asparagine glycosylation is found at asparagine 77 and asparagine 99. LRR repeat units lie at residues 125-149, 150-174, 176-199, 201-223, 225-248, and 250-271; these read LPLLKFLGIFNTGLGVFPDVTKVYS, TDVFFILEITDNPYMASIPANAFQG, CNETLTLKLYNNGFTSIQGHAFNG, KLDAVYLNKNKYLSAIDKDAFGG, YSGPTLLDVSYTSVTALPSKGLEH, and KELIARNTWTLKKLPLSLSFLH. N-linked (GlcNAc...) asparagine glycans are attached at residues asparagine 177 and asparagine 198. The N-linked (GlcNAc...) asparagine glycan is linked to asparagine 302. Tyrosine 385 is subject to Sulfotyrosine. Residues 414-441 form a helical membrane-spanning segment; that stretch reads YKFLRIVVWFVSLLALLGNVFVLIVLLT. Residues 442–450 lie on the Cytoplasmic side of the membrane; sequence SHYKLTVPR. The helical transmembrane segment at 451-473 threads the bilayer; that stretch reads FLMCNLAFADFCMGMYLLLIASV. Residues 474-494 lie on the Extracellular side of the membrane; the sequence is DLYTHSEYYNHAIDWQTGPGC. A disulfide bridge links cysteine 494 with cysteine 569. Residues 495 to 517 form a helical membrane-spanning segment; that stretch reads NTAGFFTVFASELSVYTLTVITL. The Cytoplasmic portion of the chain corresponds to 518–537; sequence ERWYAITFAMRLDRKIRLRH. A helical membrane pass occupies residues 538–560; sequence AYAIMVGGWVCCFLLALLPLVGI. The Extracellular segment spans residues 561-580; sequence SSYAKVSICLPMDTETPLAL. The chain crosses the membrane as a helical span at residues 581 to 602; sequence AYIILVLLLNIVAFIIVCSCYV. Over 603–625 the chain is Cytoplasmic; the sequence is KIYITVRNPQYNPGDKDTKIAKR. The chain crosses the membrane as a helical span at residues 626–649; the sequence is MAVLIFTDFMCMAPISFYALSALM. Residues 650-660 lie on the Extracellular side of the membrane; that stretch reads NKPLITVTNSK. A helical membrane pass occupies residues 661-682; it reads ILLVLFYPLNSCANPFLYAIFT. The Cytoplasmic segment spans residues 683-764; that stretch reads KAFQRDVFIL…ISKEYNQTVL (82 aa). A PDZ-binding motif is present at residues 762–764; that stretch reads TVL.

Belongs to the G-protein coupled receptor 1 family. FSH/LSH/TSH subfamily. As to quaternary structure, interacts with heterodimer GPHA2:GPHB5; this interaction stimulates cAMP production. Interacts (via the PDZ-binding motif) with SCRIB; regulates TSHR trafficking and function. Glycosylated. In terms of processing, sulfated. Sulfation on Tyr-385 plays a role in thyrotropin receptor binding and activation.

It localises to the cell membrane. Its subcellular location is the basolateral cell membrane. Its function is as follows. Receptor for the thyroid-stimulating hormone (TSH) or thyrotropin. Also acts as a receptor for the heterodimeric glycoprotein hormone (GPHA2:GPHB5) or thyrostimulin. The activity of this receptor is mediated by G proteins which activate adenylate cyclase. Plays a central role in controlling thyroid cell metabolism. The sequence is that of Thyrotropin receptor (TSHR) from Canis lupus familiaris (Dog).